The primary structure comprises 75 residues: MNRTKRSSRRRLPPIRSGEIIDYKNISLLRRFMSEQGKILSRRINRLTSKQQRLMTVAIKRARILALSPFLNNES.

This sequence belongs to the bacterial ribosomal protein bS18 family. As to quaternary structure, part of the 30S ribosomal subunit.

Its subcellular location is the plastid. It is found in the chloroplast. The polypeptide is Small ribosomal subunit protein bS18c (Angiopteris evecta (Mule's foot fern)).